The sequence spans 130 residues: Histone H2B.2 (130 aa).

Over residues Met1–Pro19 the composition is skewed to basic and acidic residues. Positions Met1–Lys38 are disordered. N6-acetyllysine; alternate is present on residues Lys7 and Lys8. Residues Lys7 and Lys8 each participate in a glycyl lysine isopeptide (Lys-Gly) (interchain with G-Cter in SUMO); alternate cross-link. Phosphoserine is present on Ser11. Lys12 carries the post-translational modification N6-acetyllysine. The residue at position 17 (Lys17) is an N6-acetyllysine; alternate. A Glycyl lysine isopeptide (Lys-Gly) (interchain with G-Cter in SUMO); alternate cross-link involves residue Lys17. A Glycyl lysine isopeptide (Lys-Gly) (interchain with G-Cter in SUMO) cross-link involves residue Lys18. Residue Lys124 forms a Glycyl lysine isopeptide (Lys-Gly) (interchain with G-Cter in ubiquitin) linkage.

It belongs to the histone H2B family. The nucleosome is a histone octamer containing two molecules each of H2A, H2B, H3 and H4 assembled in one H3-H4 heterotetramer and two H2A-H2B heterodimers. The octamer wraps approximately 147 bp of DNA. In terms of processing, monoubiquitinated by the UBC2-BRE1 complex to form H2BK123ub1. H2BK123ub1 gives a specific tag for epigenetic transcriptional activation and is also prerequisite for H3K4me and H3K79me formation. H2BK123ub1 also modulates the formation of double-strand breaks during meiosis and is a prerequisite for DNA-damage checkpoint activation. Phosphorylated by STE20 to form H2BS10ph during progression through meiotic prophase. May be correlated with chromosome condensation. Post-translationally, acetylated by GCN5 to form H2BK11ac and H2BK16ac. H2BK16ac can also be formed by ESA1. Acetylation of N-terminal lysines and particularly formation of H2BK11acK16ac has a positive effect on transcription. In terms of processing, sumoylation to form H2BK6su or H2BK7su, and probably also H2BK16su or H2BK17su, occurs preferentially near the telomeres and represses gene transcription.

The protein resides in the nucleus. Its subcellular location is the chromosome. Core component of nucleosome. Nucleosomes wrap and compact DNA into chromatin, limiting DNA accessibility to the cellular machineries which require DNA as a template. Histones thereby play a central role in transcription regulation, DNA repair, DNA replication and chromosomal stability. DNA accessibility is regulated via a complex set of post-translational modifications of histones, also called histone code, and nucleosome remodeling. This is Histone H2B.2 (HTB2) from Candida albicans (strain SC5314 / ATCC MYA-2876) (Yeast).